The chain runs to 136 residues: uncharacterized protein (136 aa).

Residues serine 46–arginine 136 form a disordered region. Residues glycine 99 to glycine 108 are compositionally biased toward gly residues. The span at isoleucine 123 to arginine 136 shows a compositional bias: acidic residues.

This is an uncharacterized protein from Homo sapiens (Human).